A 179-amino-acid polypeptide reads, in one-letter code: Probable RNA 2'-phosphotransferase (179 aa).

The protein belongs to the KptA/TPT1 family.

In terms of biological role, removes the 2'-phosphate from RNA via an intermediate in which the phosphate is ADP-ribosylated by NAD followed by a presumed transesterification to release the RNA and generate ADP-ribose 1''-2''-cyclic phosphate (APPR&gt;P). May function as an ADP-ribosylase. The sequence is that of Probable RNA 2'-phosphotransferase from Fusobacterium nucleatum subsp. nucleatum (strain ATCC 25586 / DSM 15643 / BCRC 10681 / CIP 101130 / JCM 8532 / KCTC 2640 / LMG 13131 / VPI 4355).